The chain runs to 189 residues: MRVGLFGGSFNPAHEGHAHVAETAMHRLKLDKVIWLVSPQNPLKSSHETRPLAERMAGVRRWARGGGMIVSDAETRLGSQYTIDTLRVLRARYPGVKFVWIMGADSLATFHRWRGWTQIMREVPVAVISRPWAALKARTSPAARRFAHARWPSSAAAILADATAPAWVYLTGPLNFASSTALRGRQTKG.

Belongs to the NadD family.

The catalysed reaction is nicotinate beta-D-ribonucleotide + ATP + H(+) = deamido-NAD(+) + diphosphate. The protein operates within cofactor biosynthesis; NAD(+) biosynthesis; deamido-NAD(+) from nicotinate D-ribonucleotide: step 1/1. Functionally, catalyzes the reversible adenylation of nicotinate mononucleotide (NaMN) to nicotinic acid adenine dinucleotide (NaAD). In Caulobacter sp. (strain K31), this protein is Probable nicotinate-nucleotide adenylyltransferase.